Consider the following 495-residue polypeptide: Lysine--tRNA ligase (495 aa).

Mg(2+) is bound by residues Glu406 and Glu413.

It belongs to the class-II aminoacyl-tRNA synthetase family. In terms of assembly, homodimer. Mg(2+) is required as a cofactor.

It localises to the cytoplasm. The catalysed reaction is tRNA(Lys) + L-lysine + ATP = L-lysyl-tRNA(Lys) + AMP + diphosphate. This chain is Lysine--tRNA ligase, found in Leptospira borgpetersenii serovar Hardjo-bovis (strain JB197).